Here is a 180-residue protein sequence, read N- to C-terminus: MSRVGKLPVAIPNGVTVTVTPDNVVTVKGPKGELVKAMSNKINIAVEDNSVVVTRDNDHKDVRALHGLTRALINNMVTGVNEGYIKTLELIGVGYRAQLQGKKLVLSLGFSHPVEMEAVSGVEFEVEGGTKVKVKGIDKELVGAVAADIRKWRKPEPYKGKGIKYENEVIRRKEGKTGKK.

Belongs to the universal ribosomal protein uL6 family. Part of the 50S ribosomal subunit.

Its function is as follows. This protein binds to the 23S rRNA, and is important in its secondary structure. It is located near the subunit interface in the base of the L7/L12 stalk, and near the tRNA binding site of the peptidyltransferase center. This Clostridium botulinum (strain 657 / Type Ba4) protein is Large ribosomal subunit protein uL6.